A 470-amino-acid polypeptide reads, in one-letter code: Cyclic AMP receptor-like protein D (470 aa).

The Extracellular portion of the chain corresponds to 1–16; that stretch reads MSSCSSLSMDDRVKIG. The chain crosses the membrane as a helical span at residues 17 to 37; sequence YGSIAGASLSIIGSIGTIILI. Over 38 to 123 the chain is Cytoplasmic; the sequence is KIRNKKQEKK…NNNQKTKVSH (86 aa). The helical transmembrane segment at 124-144 threads the bilayer; sequence FIINLSIANLLASIFMITIKL. Topologically, residues 145-176 are extracellular; the sequence is MMIHFNDKFIKVLPSTANHSFNALISVCTIGN. N-linked (GlcNAc...) asparagine glycosylation is present at Asn162. Residues Cys172 and Cys287 are joined by a disulfide bond. A helical membrane pass occupies residues 177–197; it reads GVIGFSFISTFFWTLAISMYI. Residues 198 to 253 are Cytoplasmic-facing; the sequence is YQQFLSSSTINSNNNNNNINNINNNNNNNINNINNSKNNNSINNFNNSNKSNKIIK. Residues 254 to 274 traverse the membrane as a helical segment; that stretch reads MLFYFVCWVIPFVLGSILVSG. The Extracellular segment spans residues 275–295; sequence SRLIELNSDLPWCSIDSNIQL. The chain crosses the membrane as a helical span at residues 296 to 316; the sequence is ISFYFPLIICLLATTFFTILI. Topologically, residues 317–342 are cytoplasmic; sequence KYKFSNDKLACSSSSLINLQSKIIQR. A helical transmembrane segment spans residues 343-363; the sequence is LILFLIVILVCWVPSLISFFI. The Extracellular portion of the chain corresponds to 364 to 372; the sequence is SFFSKNCKQ. The chain crosses the membrane as a helical span at residues 373 to 393; the sequence is FLWLEIISSTIQSCQGILNFL. The Cytoplasmic portion of the chain corresponds to 394–470; sequence SYLSIFKKLK…DFDNNQIQEK (77 aa).

Belongs to the G-protein coupled receptor 5 family.

The protein localises to the membrane. Functionally, receptor for cAMP. The protein is Cyclic AMP receptor-like protein D (crlD) of Dictyostelium discoideum (Social amoeba).